Here is a 466-residue protein sequence, read N- to C-terminus: A-type ATP synthase subunit B 2 (466 aa).

This sequence belongs to the ATPase alpha/beta chains family. In terms of assembly, has multiple subunits with at least A(3), B(3), C, D, E, F, H, I and proteolipid K(x).

It is found in the cell membrane. Component of the A-type ATP synthase that produces ATP from ADP in the presence of a proton gradient across the membrane. The B chain is a regulatory subunit. In Methanospirillum hungatei JF-1 (strain ATCC 27890 / DSM 864 / NBRC 100397 / JF-1), this protein is A-type ATP synthase subunit B 2.